The primary structure comprises 102 residues: MDHPHKWHRKLVNCNSDFIFKSRGHFVSISSQLGQHNFTIFNRYHLKKRIVFQILVNSSLRFSEQNFSITQNEAGIWKQLFNSPQSFPHTDIPSEEGTKVIL.

This is an uncharacterized protein from Saccharomyces cerevisiae (strain ATCC 204508 / S288c) (Baker's yeast).